The following is a 537-amino-acid chain: Chaperonin GroEL 2 (537 aa).

Residues 29 to 32 (TLGP), 86 to 90 (DGTTT), Gly-412, and Asp-495 each bind ATP.

This sequence belongs to the chaperonin (HSP60) family. Forms a cylinder of 14 subunits composed of two heptameric rings stacked back-to-back. Interacts with the co-chaperonin GroES.

The protein localises to the cytoplasm. It catalyses the reaction ATP + H2O + a folded polypeptide = ADP + phosphate + an unfolded polypeptide.. Its function is as follows. Together with its co-chaperonin GroES, plays an essential role in assisting protein folding. The GroEL-GroES system forms a nano-cage that allows encapsulation of the non-native substrate proteins and provides a physical environment optimized to promote and accelerate protein folding. This Paenarthrobacter aurescens (strain TC1) protein is Chaperonin GroEL 2.